The chain runs to 1170 residues: Structural maintenance of chromosomes protein 2 (1170 aa).

32–39 (GLNGSGKS) serves as a coordination point for ATP. The stretch at 172 to 469 (KMFEDRREKA…DKLRARLVEY (298 aa)) forms a coiled coil. The SMC hinge domain maps to 523 to 641 (VHGVVGQLFQ…CEDPETAKKI (119 aa)). Positions 678–1027 (VDIQKYNQIQ…ISKLNEYKRE (350 aa)) form a coiled coil.

It belongs to the SMC family. SMC2 subfamily. Forms a heterodimer with SMC4. Component of the condensin complex, which contains the SMC2 and SMC4 heterodimer, and three non SMC subunits that probably regulate the complex: BRN1, YCS4 and YCG1/YCS5.

Its subcellular location is the nucleus. The protein resides in the cytoplasm. It is found in the chromosome. Functionally, central component of the condensin complex, a complex required for conversion of interphase chromatin into mitotic-like condense chromosomes. The condensin complex probably introduces positive supercoils into relaxed DNA in the presence of type I topoisomerases and converts nicked DNA into positive knotted forms in the presence of type II topoisomerases. The polypeptide is Structural maintenance of chromosomes protein 2 (SMC2) (Saccharomyces cerevisiae (strain ATCC 204508 / S288c) (Baker's yeast)).